A 102-amino-acid chain; its full sequence is Small ribosomal subunit protein uS10 (102 aa).

The protein belongs to the universal ribosomal protein uS10 family. As to quaternary structure, part of the 30S ribosomal subunit.

In terms of biological role, involved in the binding of tRNA to the ribosomes. The sequence is that of Small ribosomal subunit protein uS10 from Heliobacterium modesticaldum (strain ATCC 51547 / Ice1).